Consider the following 482-residue polypeptide: Glutamate--tRNA ligase (482 aa).

The short motif at 9 to 19 (PSPTGPIHVGN) is the 'HIGH' region element. Residues Cys106, Cys108, Cys133, and Asp135 each coordinate Zn(2+). A 'KMSKS' region motif is present at residues 250–254 (KLSKR). Lys253 contacts ATP.

The protein belongs to the class-I aminoacyl-tRNA synthetase family. Glutamate--tRNA ligase type 1 subfamily. Monomer. Zn(2+) is required as a cofactor.

Its subcellular location is the cytoplasm. The enzyme catalyses tRNA(Glu) + L-glutamate + ATP = L-glutamyl-tRNA(Glu) + AMP + diphosphate. Catalyzes the attachment of glutamate to tRNA(Glu) in a two-step reaction: glutamate is first activated by ATP to form Glu-AMP and then transferred to the acceptor end of tRNA(Glu). The chain is Glutamate--tRNA ligase from Symbiobacterium thermophilum (strain DSM 24528 / JCM 14929 / IAM 14863 / T).